A 365-amino-acid polypeptide reads, in one-letter code: Probable cinnamyl alcohol dehydrogenase (365 aa).

C47 is a binding site for Zn(2+). An NADP(+)-binding site is contributed by T49. Residues H69, E70, C100, C103, C106, C114, and C163 each contribute to the Zn(2+) site. Residues T167, 188–193, 211–216, T251, G275, and 298–300 each bind NADP(+); these read GLGGVG, SSSSKK, and SFI.

Belongs to the zinc-containing alcohol dehydrogenase family. In terms of assembly, homodimer. Zn(2+) serves as cofactor.

It carries out the reaction (E)-cinnamyl alcohol + NADP(+) = (E)-cinnamaldehyde + NADPH + H(+). The enzyme catalyses (E)-coniferol + NADP(+) = (E)-coniferaldehyde + NADPH + H(+). The catalysed reaction is (E)-sinapyl alcohol + NADP(+) = (E)-sinapaldehyde + NADPH + H(+). It catalyses the reaction (E)-4-coumaroyl alcohol + NADP(+) = (E)-4-coumaraldehyde + NADPH + H(+). It carries out the reaction (E)-caffeyl alcohol + NADP(+) = (E)-caffeyl aldehyde + NADPH + H(+). It functions in the pathway aromatic compound metabolism; phenylpropanoid biosynthesis. In terms of biological role, involved in lignin biosynthesis. Catalyzes the final step specific for the production of lignin monomers. Catalyzes the NADPH-dependent reduction of coniferaldehyde, 5-hydroxyconiferaldehyde, sinapaldehyde, 4-coumaraldehyde and caffeyl aldehyde to their respective alcohols. The chain is Probable cinnamyl alcohol dehydrogenase (CAD) from Saccharum officinarum (Sugarcane).